A 128-amino-acid polypeptide reads, in one-letter code: Flagellar assembly factor FliW (128 aa).

Belongs to the FliW family. In terms of assembly, interacts with translational regulator CsrA and flagellin(s).

It localises to the cytoplasm. Functionally, acts as an anti-CsrA protein, binds CsrA and prevents it from repressing translation of its target genes, one of which is flagellin. Binds to flagellin and participates in the assembly of the flagellum. This is Flagellar assembly factor FliW from Campylobacter fetus subsp. fetus (strain 82-40).